The primary structure comprises 443 residues: MSRDVRAEKLAISLLILSLFLIFQLVAEIYLNNGDQYHTETSPFTRGRSHVTRVPNHDASLSIPFLDKINQFWHVGGATQIRNIQSIKLTQDRDQDKHGLVLSNGIGDNTINDFEIVFTFRISHDPTTQLTGDGMCFAITPENGFLTQNLQSSYAKKQYMMNSQGVIADNTDLMGFPKNLPGLFIVLDTYRNQGHDHKEVPFMDVFINVAPESDWYDINSDGELSTSLRLNSRGHIKLKKNALWNRVTKLRIIYLESISFLKIDVQYAKEGNYWIELFQTTENLYLPKNMHTGQRYIGCSALNGQLTETVELLDVSTSEFHWNDMDASIEDTYDYAKEAELFLEQEFGEVLDREPDEFTKWKMIKAQPNIKTGSQSAEQKTSNNPHSRLFKVVLTIWHYSEILLLIMGIYLFSACIRVFQRRFKKIRSRRKRAGSHSVGLLPM.

Residues 1–27 (MSRDVRAEKLAISLLILSLFLIFQLVA) form the signal peptide. At 28–398 (EIYLNNGDQY…LFKVVLTIWH (371 aa)) the chain is on the perinuclear space side. A helical transmembrane segment spans residues 399–420 (YSEILLLIMGIYLFSACIRVFQ). Residues 421–443 (RRFKKIRSRRKRAGSHSVGLLPM) are Cytoplasmic-facing.

It is found in the nucleus membrane. The chain is Protein UIP5 (UIP5) from Saccharomyces cerevisiae (strain ATCC 204508 / S288c) (Baker's yeast).